We begin with the raw amino-acid sequence, 506 residues long: RNA-splicing ligase RtcB homolog (506 aa).

Residues D120, C123, H228, H260, and H354 each contribute to the Mn(2+) site. GMP is bound at residue 227 to 231; sequence NHYAE. GMP is bound by residues 354 to 355, 403 to 406, S410, 429 to 432, and K505; these read HN, GGTM, and HGAG. H429 serves as the catalytic GMP-histidine intermediate.

The protein belongs to the RtcB family. Catalytic component of the tRNA-splicing ligase complex. It depends on Mn(2+) as a cofactor.

The catalysed reaction is a 3'-end 3'-phospho-ribonucleotide-RNA + a 5'-end dephospho-ribonucleoside-RNA + GTP = a ribonucleotidyl-ribonucleotide-RNA + GMP + diphosphate. It carries out the reaction a 3'-end 2',3'-cyclophospho-ribonucleotide-RNA + a 5'-end dephospho-ribonucleoside-RNA + GTP + H2O = a ribonucleotidyl-ribonucleotide-RNA + GMP + diphosphate + H(+). In terms of biological role, catalytic subunit of the tRNA-splicing ligase complex that acts by directly joining spliced tRNA halves to mature-sized tRNAs by incorporating the precursor-derived splice junction phosphate into the mature tRNA as a canonical 3',5'-phosphodiester. May act as an RNA ligase with broad substrate specificity, and may function toward other RNAs. This chain is RNA-splicing ligase RtcB homolog, found in Plasmodium falciparum (isolate 3D7).